The primary structure comprises 465 residues: Mothers against decapentaplegic homolog 1 (465 aa).

M1 bears the N-acetylmethionine mark. In terms of domain architecture, MH1 spans 12–136 (PAVKRLLGWK…YKRVESPVLP (125 aa)). Residues C64, C109, C121, and H126 each contribute to the Zn(2+) site. Residues 162–246 (NEPHMPLNAT…DGSQPMDTNM (85 aa)) form a disordered region. Low complexity predominate over residues 179–212 (PNSHPFPHSPNSSYPNSPGGSSSTYPHSPTSSDP). Positions 221–232 (DTPPPAYLPPED) are enriched in pro residues. One can recognise an MH2 domain in the interval 271–465 (WCSIVYYELN…SPHNPISSVS (195 aa)). The residue at position 322 (T322) is a Phosphothreonine; by MINK1, TNIK and MAP4K4. The tract at residues 418–428 (KGWGAEYHRQD) is L3 loop. Phosphoserine occurs at positions 463 and 465.

It belongs to the dwarfin/SMAD family. Found in a complex with SMAD4 and YY1. Interacts with HGS, NANOG and ZCCHC12. Upon C-terminus phosphorylation: forms trimers with another SMAD1 and the co-SMAD SMAD4. Interacts with PEBP2-alpha subunit, CREB-binding protein (CBP), p300, SMURF1, SMURF2, USP15 and HOXC8. Associates with ZNF423 or ZNF521 in response to BMP2 leading to activate transcription of BMP target genes. Interacts with SKOR1. Interacts (via MH2 domain) with LEMD3. Binding to LEMD3 results in at least a partial reduction of receptor-mediated phosphorylation. Forms a ternary complex with PSMB4 and OAZ1 before PSMB4 is incorporated into the 20S proteasome. Interacts (via MH2 domain) with FAM83G (via MH2 domain); in a SMAD4-independent manner. Interacts with ZC3H3. Interacts with TMEM119. Interacts (via MH1 and MH2 domains) with ZNF8. Interacts with RANBP3L; the interaction increases when SMAD1 is not phosphorylated and mediates SMAD1 nuclear export. Interacts with EGR1; this interaction inhibits SMAD1 dephosphorylation. Interacts with SMAD6. Interacts with YAP1. Interacts with MTMR4; negatively regulates BMP signaling through SMAD1 dephosphorylation and retention in endosomes. In terms of processing, phosphorylation of the C-terminal SVS motif by BMP type 1 receptor kinase activates SMAD1 by promoting dissociation from the receptor and trimerization with SMAD4. Phosphorylation by ERK2 MAP kinase in response to EGF or HGF prevents SMAD1 nuclear accumulation and transcriptional activity in response to BMP. Dephosphorylation, probably by PPM1A, induces its export from the nucleus to the cytoplasm. Dephosphorylation is inhibited by association with EGR1. Phosphorylation by CDK8/9 creates binding sites for YAP1, and subsequent phosphorylation by GSK3 switches off YAP1 binding and adds binding sites for SMURF1. Ubiquitinated by SMAD-specific E3 ubiquitin ligase SMURF1, leading to its degradation. Monoubiquitinated, leading to prevent DNA-binding. Deubiquitination by USP15 alleviates inhibition and promotes activation of TGF-beta target genes. Dephosphorylation, probably by PPM1A, induces its export from the nucleus to the cytoplasm. Phospho-SMAD1 is ubiquitinated by CHIP leading to disruption of the SMAD1-SMAD4 complex. Ubiquitous.

Its subcellular location is the cytoplasm. It is found in the nucleus. In terms of biological role, transcriptional modulator that plays a role in various cellular processes, including embryonic development, cell differentiation, and tissue homeostasis. Upon BMP ligand binding to their receptors at the cell surface, is phosphorylated by activated type I BMP receptors (BMPRIs) and associates with SMAD4 to form a heteromeric complex which translocates into the nucleus acting as transcription factor. In turn, the hetero-trimeric complex recognizes cis-regulatory elements containing Smad Binding Elements (SBEs) to modulate the outcome of the signaling network. SMAD1/OAZ1/PSMB4 complex mediates the degradation of the CREBBP/EP300 repressor SNIP1. Positively regulates BMP4-induced expression of odontogenic development regulator MSX1 following IPO7-mediated nuclear import. This is Mothers against decapentaplegic homolog 1 (Smad1) from Mus musculus (Mouse).